Reading from the N-terminus, the 285-residue chain is Putative sugar uptake protein lin0444 (285 aa).

9 consecutive transmembrane segments (helical) span residues 2-21, 31-50, 55-77, 111-133, 146-168, 172-194, 207-229, 233-255, and 262-284; these read SIYL…PIIA, QLLG…FWIL, TVLS…LLQF, WQTV…GVVM, SVSF…YVVT, FDVT…AIGI, VTFN…LATA, VATS…ILIF, and LEWT…LSLL.

This sequence belongs to the GRP transporter (TC 2.A.7.5) family.

Its subcellular location is the cell membrane. The polypeptide is Putative sugar uptake protein lin0444 (Listeria innocua serovar 6a (strain ATCC BAA-680 / CLIP 11262)).